A 450-amino-acid chain; its full sequence is Glutamyl-tRNA(Gln) amidotransferase subunit A, mitochondrial (450 aa).

Catalysis depends on charge relay system residues lysine 47 and serine 122. Catalysis depends on serine 146, which acts as the Acyl-ester intermediate.

It belongs to the amidase family. GatA subfamily. As to quaternary structure, subunit of the heterotrimeric GatFAB amidotransferase (AdT) complex, composed of A, B and F subunits.

It localises to the mitochondrion. The enzyme catalyses L-glutamyl-tRNA(Gln) + L-glutamine + ATP + H2O = L-glutaminyl-tRNA(Gln) + L-glutamate + ADP + phosphate + H(+). Its function is as follows. Allows the formation of correctly charged Gln-tRNA(Gln) through the transamidation of misacylated Glu-tRNA(Gln) in the mitochondria. The reaction takes place in the presence of glutamine and ATP through an activated gamma-phospho-Glu-tRNA(Gln). In Candida albicans (strain SC5314 / ATCC MYA-2876) (Yeast), this protein is Glutamyl-tRNA(Gln) amidotransferase subunit A, mitochondrial.